The sequence spans 201 residues: MSGRSVRAETRSRAKDDIKKVMAAIERVRRWEKKWVTVGDTSLRIFKWVPVTETKQIYKPKGAGPAVRELKGFPTDVVLENARSVLLDFQDDNSNQSFLSDAYQSNTKVDSSSNSSPQHVSEAVSPSHPPYYRTEDSQPPTLGQESMEAEREASTTSSEVTDEPPTLIKEDVLSLSTQEEEEAIGAPPLKRVCTEHNSTVS.

Residues 104–201 are disordered; it reads QSNTKVDSSS…VCTEHNSTVS (98 aa).

This sequence belongs to the BCL7 family.

This is B-cell CLL/lymphoma 7 protein family member B-B from Danio rerio (Zebrafish).